The sequence spans 97 residues: Aspartyl/glutamyl-tRNA(Asn/Gln) amidotransferase subunit C (97 aa).

Residues 59–78 (STGKLRPDEPAQPLSRDDAL) are disordered. Basic and acidic residues predominate over residues 63-78 (LRPDEPAQPLSRDDAL).

It belongs to the GatC family. Heterotrimer of A, B and C subunits.

The catalysed reaction is L-glutamyl-tRNA(Gln) + L-glutamine + ATP + H2O = L-glutaminyl-tRNA(Gln) + L-glutamate + ADP + phosphate + H(+). It catalyses the reaction L-aspartyl-tRNA(Asn) + L-glutamine + ATP + H2O = L-asparaginyl-tRNA(Asn) + L-glutamate + ADP + phosphate + 2 H(+). In terms of biological role, allows the formation of correctly charged Asn-tRNA(Asn) or Gln-tRNA(Gln) through the transamidation of misacylated Asp-tRNA(Asn) or Glu-tRNA(Gln) in organisms which lack either or both of asparaginyl-tRNA or glutaminyl-tRNA synthetases. The reaction takes place in the presence of glutamine and ATP through an activated phospho-Asp-tRNA(Asn) or phospho-Glu-tRNA(Gln). This is Aspartyl/glutamyl-tRNA(Asn/Gln) amidotransferase subunit C from Metallosphaera sedula (strain ATCC 51363 / DSM 5348 / JCM 9185 / NBRC 15509 / TH2).